Reading from the N-terminus, the 516-residue chain is GMP synthase [glutamine-hydrolyzing] (516 aa).

One can recognise a Glutamine amidotransferase type-1 domain in the interval 10-201 (KIIVLDFGSQ…AFDVCGAVAN (192 aa)). Cys87 serves as the catalytic Nucleophile. Catalysis depends on residues His175 and Glu177. In terms of domain architecture, GMPS ATP-PPase spans 202 to 391 (WTMADFIDMQ…LGIPHDLVWR (190 aa)). 229–235 (SGGVDSS) contacts ATP.

As to quaternary structure, homodimer.

The catalysed reaction is XMP + L-glutamine + ATP + H2O = GMP + L-glutamate + AMP + diphosphate + 2 H(+). It functions in the pathway purine metabolism; GMP biosynthesis; GMP from XMP (L-Gln route): step 1/1. In terms of biological role, catalyzes the synthesis of GMP from XMP. The sequence is that of GMP synthase [glutamine-hydrolyzing] from Lactobacillus acidophilus (strain ATCC 700396 / NCK56 / N2 / NCFM).